Consider the following 690-residue polypeptide: Glutaminase A (690 aa).

The first 20 residues, 1–20 (MMHFLSFCLSVASLVSYAGA), serve as a signal peptide directing secretion. 7 N-linked (GlcNAc...) asparagine glycosylation sites follow: Asn-80, Asn-96, Asn-435, Asn-508, Asn-528, Asn-538, and Asn-571.

It belongs to the fungal glutaminase gtaA family.

It localises to the secreted. The enzyme catalyses L-glutamine + H2O = L-glutamate + NH4(+). Activity is inhibited by about 80% in the presence of 18% sodium chloride. Its function is as follows. Glutaminase catalyzes the hydrolysis of glutamine to glutamic acid and plays a key role in nitrogen metabolism. Catalyzes the hydrolysis not only of L-glutamine but also of D-glutamine. This Aspergillus oryzae (strain ATCC 42149 / RIB 40) (Yellow koji mold) protein is Glutaminase A.